Consider the following 391-residue polypeptide: uncharacterized protein (391 aa).

This is an uncharacterized protein from Methanocaldococcus jannaschii (strain ATCC 43067 / DSM 2661 / JAL-1 / JCM 10045 / NBRC 100440) (Methanococcus jannaschii).